We begin with the raw amino-acid sequence, 95 residues long: Protein K6 (95 aa).

The N-terminal stretch at 1–24 is a signal peptide; it reads MAPVHVLCCVSVLLATFYLTPTES.

This Human herpesvirus 8 type P (isolate GK18) (HHV-8) protein is Protein K6 (K6).